We begin with the raw amino-acid sequence, 317 residues long: Transaldolase 1 (317 aa).

The Schiff-base intermediate with substrate role is filled by Lys132.

The protein belongs to the transaldolase family. Type 1 subfamily. Homodimer.

It localises to the cytoplasm. It carries out the reaction D-sedoheptulose 7-phosphate + D-glyceraldehyde 3-phosphate = D-erythrose 4-phosphate + beta-D-fructose 6-phosphate. Its pathway is carbohydrate degradation; pentose phosphate pathway; D-glyceraldehyde 3-phosphate and beta-D-fructose 6-phosphate from D-ribose 5-phosphate and D-xylulose 5-phosphate (non-oxidative stage): step 2/3. In terms of biological role, transaldolase is important for the balance of metabolites in the pentose-phosphate pathway. The sequence is that of Transaldolase 1 from Shigella sonnei (strain Ss046).